Reading from the N-terminus, the 423-residue chain is Histidine--tRNA ligase (423 aa).

It belongs to the class-II aminoacyl-tRNA synthetase family. Homodimer.

The protein localises to the cytoplasm. The enzyme catalyses tRNA(His) + L-histidine + ATP = L-histidyl-tRNA(His) + AMP + diphosphate + H(+). The polypeptide is Histidine--tRNA ligase (Prochlorococcus marinus (strain NATL1A)).